Reading from the N-terminus, the 307-residue chain is Cuticle collagen 36 (307 aa).

2 disordered regions span residues 76–102 (TRSRRDAGYKEGSGSGGSGSGGYGGPT) and 116–307 (QQGP…PPGY). Residues 86 to 102 (EGSGSGGSGSGGYGGPT) show a composition bias toward gly residues. 6 triple-helical region regions span residues 89–105 (GSGGSGSGGYGGPTGAG), 118–150 (GPAGPPGPAGDTGPNGNDGHHGAPGVPGKEGSI), 167–187 (GPQGAVGQQGPKGPPGPKGKS), 194–226 (GKNGEPGMIGPPGPPGGVGEPGPPGPAGQPGRV), 231–257 (GAAGPAGPRGVKGPPGPKGLPGIAGLT), and 260–295 (GGQGPPGDAGGPGPVGGQGPPGPQGPQGPPGDEGSC). A compositionally biased stretch (pro residues) spans 157-168 (PSEPCIICPPGP). Positions 186–196 (KSQERAADGKN) are enriched in basic and acidic residues. Over residues 202 to 220 (IGPPGPPGGVGEPGPPGPA) the composition is skewed to pro residues. Low complexity predominate over residues 231–242 (GAAGPAGPRGVK). A compositionally biased stretch (gly residues) spans 258–278 (EIGGQGPPGDAGGPGPVGGQG). Residues 279 to 288 (PPGPQGPQGP) show a composition bias toward pro residues.

Belongs to the cuticular collagen family. Collagen polypeptide chains are complexed within the cuticle by disulfide bonds and other types of covalent cross-links.

Nematode cuticles are composed largely of collagen-like proteins. The cuticle functions both as an exoskeleton and as a barrier to protect the worm from its environment. The chain is Cuticle collagen 36 (col-36) from Caenorhabditis elegans.